The sequence spans 176 residues: Replication restart protein PriC (176 aa).

Belongs to the PriC family. Component of the replication restart primosome, which is composed of PriA, PriB, PriC, DnaB and DnaT; DnaG primase associates transiently with this complex. Interacts with the C-terminus of SSB; this interaction is required to load the main replicative helicase onto substrate replication forks. Interacts with helicase DnaB alone and in the DnaB-DnaC complex, probably 1:1 binding with DnaB. Interacts with DnaT.

Functionally, involved in the restart of stalled replication forks, which reloads the DnaB replicative helicase on sites other than the origin of replication. Recognizes abandoned replication forks and remodels DNA single-stranded binding protein (SSB) on ssDNA to uncover a loading site for DnaB. There are several restart pathways, the PriA-PriC pathway is a minor restart pathway. Part of the minor PriC-Rep pathway for restart of stalled replication forks, which has a different substrate specificity than PriA. Part of the major restart pathway with PriA, PriB, DnaB, DnaT and DnaG primase. priB and priC have redundant roles in the cell. Binds 7-9 nucleotides of single-stranded (ss)DNA. The chain is Replication restart protein PriC from Klebsiella pneumoniae subsp. pneumoniae (strain ATCC 700721 / MGH 78578).